The primary structure comprises 139 residues: Large ribosomal subunit protein uL16 (139 aa).

Positions 1-19 (MLIPRRVKYRKQHHPKRTG) are enriched in basic residues. The segment at 1 to 23 (MLIPRRVKYRKQHHPKRTGAAKG) is disordered.

The protein belongs to the universal ribosomal protein uL16 family. In terms of assembly, part of the 50S ribosomal subunit.

Functionally, binds 23S rRNA and is also seen to make contacts with the A and possibly P site tRNAs. The protein is Large ribosomal subunit protein uL16 of Cutibacterium acnes (strain DSM 16379 / KPA171202) (Propionibacterium acnes).